We begin with the raw amino-acid sequence, 449 residues long: Na(+)-translocating NADH-quinone reductase subunit A (449 aa).

It belongs to the NqrA family. Composed of six subunits; NqrA, NqrB, NqrC, NqrD, NqrE and NqrF.

It catalyses the reaction a ubiquinone + n Na(+)(in) + NADH + H(+) = a ubiquinol + n Na(+)(out) + NAD(+). Its function is as follows. NQR complex catalyzes the reduction of ubiquinone-1 to ubiquinol by two successive reactions, coupled with the transport of Na(+) ions from the cytoplasm to the periplasm. NqrA to NqrE are probably involved in the second step, the conversion of ubisemiquinone to ubiquinol. The polypeptide is Na(+)-translocating NADH-quinone reductase subunit A (Serratia proteamaculans (strain 568)).